A 133-amino-acid chain; its full sequence is Large ribosomal subunit protein uL14 (133 aa).

Belongs to the universal ribosomal protein uL14 family. As to quaternary structure, part of the 50S ribosomal subunit. Forms a cluster with proteins L3 and L19. In the 70S ribosome, L14 and L19 interact and together make contacts with the 16S rRNA in bridges B5 and B8.

Functionally, binds to 23S rRNA. Forms part of two intersubunit bridges in the 70S ribosome. In Gloeobacter violaceus (strain ATCC 29082 / PCC 7421), this protein is Large ribosomal subunit protein uL14.